An 841-amino-acid polypeptide reads, in one-letter code: uncharacterized protein (841 aa).

The N-terminal stretch at 1–31 (MKIERYFKAIARAFIITFLFSLILQDNGVLA) is a signal peptide.

Its subcellular location is the secreted. This is an uncharacterized protein from Schizosaccharomyces pombe (strain 972 / ATCC 24843) (Fission yeast).